We begin with the raw amino-acid sequence, 1014 residues long: Probable sucrose-phosphate synthase 5 (1014 aa).

Basic and acidic residues-rich tracts occupy residues 29-41 (RRLE…REAA) and 49-58 (EGEKDGKPDT). 2 disordered regions span residues 29-108 (RRLE…SDEE) and 648-677 (QLLR…SSEP).

The protein belongs to the glycosyltransferase 1 family. As to quaternary structure, homodimer or homotetramer. In terms of tissue distribution, expressed in germinating seeds.

The enzyme catalyses beta-D-fructose 6-phosphate + UDP-alpha-D-glucose = sucrose 6(F)-phosphate + UDP + H(+). The protein operates within glycan biosynthesis; sucrose biosynthesis; sucrose from D-fructose 6-phosphate and UDP-alpha-D-glucose: step 1/2. Its activity is regulated as follows. Activity is regulated by phosphorylation and moderated by concentration of metabolites and light. Functionally, plays a role in photosynthetic sucrose synthesis by catalyzing the rate-limiting step of sucrose biosynthesis from UDP-glucose and fructose- 6-phosphate. Involved in the regulation of carbon partitioning in the leaves of plants. May regulate the synthesis of sucrose and therefore play a major role as a limiting factor in the export of photoassimilates out of the leaf. Plays a role for sucrose availability that is essential for plant growth and fiber elongation. The protein is Probable sucrose-phosphate synthase 5 (SPS5) of Oryza sativa subsp. japonica (Rice).